The chain runs to 230 residues: uncharacterized protein (230 aa).

6 consecutive transmembrane segments (helical) span residues A4–L24, L30–F50, L67–V87, V91–F111, M148–L168, and M210–I230.

Belongs to the YohK (E.coli)/YwbG (IPA-22R) (B.subtilis) family.

The protein localises to the cell membrane. This is an uncharacterized protein from Bacillus subtilis (strain 168).